Consider the following 277-residue polypeptide: Outer kinetochore KNL1 complex subunit ZWINT (277 aa).

Positions 80 to 155 (ASEDTSRQKA…MEKRRAVQNQ (76 aa)) are interaction with NDC80 and ZW10. Residues 104-217 (REHVEAIKIG…RYQTFLQLLY (114 aa)) are a coiled coil. The tract at residues 228 to 277 (AEAEAENLPDDKPQQPTRPQEQSTGDTMGRDPGVSFKAVGLQPAGDVNLP) is disordered. A compositionally biased stretch (polar residues) spans 241 to 253 (QQPTRPQEQSTGD).

In terms of assembly, component of the KNL1 complex composed of KNL1 and ZWINT. Part of the ten-subunit outer kinetochore KMN network that includes the KNL1, MIS12 and NDC80 complexes; a bioriented kinetochore contains approximately 150 copies of the network. Interacts with the MIS12 complex subunits MIS12 DSN1, and PMF1. Interacts with the NDC80 complex subunit NDC80 during mitosis. Interacts with ZW10. Interacts with CETN3.

It is found in the nucleus. Its subcellular location is the chromosome. The protein resides in the centromere. The protein localises to the kinetochore. Functionally, acts as a component of the outer kinetochore KNL1 complex that serves as a docking point for spindle assembly checkpoint components and mediates microtubule-kinetochore interactions. Kinetochores, consisting of a centromere-associated inner segment and a microtubule-contacting outer segment, play a crucial role in chromosome segregation by mediating the physical connection between centromeric DNA and spindle microtubules. The outer kinetochore is made up of the ten-subunit KMN network, comprising the MIS12, NDC80 and KNL1 complexes, and auxiliary microtubule-associated components; together they connect the outer kinetochore with the inner kinetochore, bind microtubules, and mediate interactions with mitotic checkpoint proteins that delay anaphase until chromosomes are bioriented on the spindle. Targets the RZZ complex to the kinetochore at prometaphase. Recruits MAD2L1 to the kinetochore, but is not required for BUB1B localization. In addition to orienting mitotic chromosomes, it is also essential for alignment of homologous chromosomes during meiotic metaphase I. In meiosis I, required to activate the spindle assembly checkpoint at unattached kinetochores to correct erroneous kinetochore-microtubule attachments. In Homo sapiens (Human), this protein is Outer kinetochore KNL1 complex subunit ZWINT (ZWINT).